We begin with the raw amino-acid sequence, 562 residues long: NAD-dependent malic enzyme (562 aa).

Tyr-101 serves as the catalytic Proton donor. Arg-154 contributes to the NAD(+) binding site. Residue Lys-172 is the Proton acceptor of the active site. A divalent metal cation is bound by residues Glu-243, Asp-244, and Asp-267. The NAD(+) site is built by Asp-267 and Asn-415.

The protein belongs to the malic enzymes family. As to quaternary structure, homotetramer. The cofactor is Mg(2+). Requires Mn(2+) as cofactor.

The enzyme catalyses (S)-malate + NAD(+) = pyruvate + CO2 + NADH. It catalyses the reaction oxaloacetate + H(+) = pyruvate + CO2. The sequence is that of NAD-dependent malic enzyme from Shewanella woodyi (strain ATCC 51908 / MS32).